Consider the following 432-residue polypeptide: Adenylosuccinate synthetase (432 aa).

GTP contacts are provided by residues 13 to 19 and 41 to 43; these read GDEGKGK and GHT. Catalysis depends on D14, which acts as the Proton acceptor. Residues D14 and G41 each contribute to the Mg(2+) site. IMP is bound by residues 14 to 17, 39 to 42, T130, R144, Q225, T240, and R304; these read DEGK and NAGH. H42 acts as the Proton donor in catalysis. 300-306 contributes to the substrate binding site; sequence ATTGRSR. Residues R306, 332–334, and 415–417 each bind GTP; these read KLD and STG.

This sequence belongs to the adenylosuccinate synthetase family. In terms of assembly, homodimer. It depends on Mg(2+) as a cofactor.

It is found in the cytoplasm. It carries out the reaction IMP + L-aspartate + GTP = N(6)-(1,2-dicarboxyethyl)-AMP + GDP + phosphate + 2 H(+). Its pathway is purine metabolism; AMP biosynthesis via de novo pathway; AMP from IMP: step 1/2. In terms of biological role, plays an important role in the de novo pathway of purine nucleotide biosynthesis. Catalyzes the first committed step in the biosynthesis of AMP from IMP. This chain is Adenylosuccinate synthetase, found in Marinomonas sp. (strain MWYL1).